A 277-amino-acid chain; its full sequence is Glucose-6-phosphatase catalytic subunit 1 (277 aa).

Arginine 4 provides a ligand contact to substrate. 2 consecutive transmembrane segments (helical) span residues glycine 39–alanine 59 and leucine 67–valine 87. Histidine 40 (proton donor) is an active-site residue. Arginine 91 lines the substrate pocket. Residue histidine 97 is the Nucleophile of the active site. A run of 3 helical transmembrane segments spans residues phenylalanine 131–leucine 151, isoleucine 215–proline 235, and alanine 250–valine 270. The Prevents secretion from ER motif lies at glycine 274 to leucine 277.

It belongs to the glucose-6-phosphatase family.

Its subcellular location is the endoplasmic reticulum membrane. The catalysed reaction is D-glucose 6-phosphate + H2O = D-glucose + phosphate. It participates in carbohydrate biosynthesis; gluconeogenesis. Its function is as follows. Hydrolyzes glucose-6-phosphate to glucose in the endoplasmic reticulum. Forms with the glucose-6-phosphate transporter (SLC37A4/G6PT) the complex responsible for glucose production in the terminal step of glycogenolysis and gluconeogenesis. Hence, it is the key enzyme in homeostatic regulation of blood glucose levels. The protein is Glucose-6-phosphatase catalytic subunit 1 (g6pc1) of Haplochromis xenognathus (Lake Victoria cichlid).